The following is an 868-amino-acid chain: MSGRDNRGAGGGGGGHQPLSSAMGKLKEKLTRAGDDQGYHRVESNLSTSNTATSLDTILPEDPFLFPQAAPQRHPLPRPQQQQQQQRQQLRLLEDEPPLSFRPLLEDDDINEPPTQPFQQQQQRTPLRASGSLELTPLPPPPTSQEIREHRDRQQRSVPVPVEDLQRSKQSLKGSRVSFEKNNASSKPPAQAESSDEDSFEDKRIGFQQQKATSVDHKGILKDLKHILANDNRRQFQAKKHVSLDVKGTRFLQDLLKESSSEEEFHKTRREFQGRKHQSLDPRVTFKLDKVLQGSSTDSDEEGDDPEHKRLIHRPKDITKPLIIDLKDLESESDEDFHTSRQHFQQQRSISTDSRKSRRPYEMDEMGNKRGENIRHAVPFVRQITEDGKPKLEVYRPTTNPIYIWTQVLAALSVSLGSLVVGFVSAYTSPALVSMTNRNMTSFEVTPQAASWVGGIMPLAGLAGGIAGGPFIEYLGRRNTILATAIPFIVSSLLIACAVNVAMVLAGRFLAGFCVGIASLSLPVYLGETVQPEVRGTLGLLPTAFGNIGILLCFVAGTYMDWSMLAFLGAALPVPFLILMFLIPETPRWFVSRGREEKARKALSWLRGKEADVEPELKGLMRSQADADRQATQNKMMELLKRNNLKPLSISLGLMFFQQLSGINAVIFYTVSIFKDAGSTIDGNLCTIIVGIVNFMATFIATLLIDRAGRKILLYVSNIAMIITLFVLGGFFYCKSHGQDVSQLGWLPLSCFVIYILGFSLGFGPIPWLMMGEILPSKIRGSAASVATAFNWSCTFVVTKTFQDMIDFMGAHGAFWLFGSICFIGLFFVILYVPETQGKTLEDIERKMMGRVRRMSSVANMKPLAFNM.

Disordered stretches follow at residues 1–213 and 257–314; these read MSGR…QKAT and KESS…LIHR. Topologically, residues 1 to 403 are cytoplasmic; that stretch reads MSGRDNRGAG…VYRPTTNPIY (403 aa). Residues 25-43 are compositionally biased toward basic and acidic residues; it reads KLKEKLTRAGDDQGYHRVE. Composition is skewed to low complexity over residues 44–57, 79–91, and 117–126; these read SNLSTSNTATSLDT, PQQQQQQQRQQLR, and PFQQQQQRTP. 2 stretches are compositionally biased toward basic and acidic residues: residues 146-155 and 257-290; these read EIREHRDRQQ and KESSSEEEFHKTRREFQGRKHQSLDPRVTFKLDK. 5 positions are modified to phosphoserine: Ser-259, Ser-260, Ser-261, Ser-331, and Ser-333. The segment at 335–367 is disordered; sequence EDFHTSRQHFQQQRSISTDSRKSRRPYEMDEMG. Polar residues predominate over residues 342–352; the sequence is QHFQQQRSIST. The segment covering 353–367 has biased composition (basic and acidic residues); it reads DSRKSRRPYEMDEMG. A helical membrane pass occupies residues 404–424; sequence IWTQVLAALSVSLGSLVVGFV. Topologically, residues 425 to 451 are extracellular; it reads SAYTSPALVSMTNRNMTSFEVTPQAAS. The N-linked (GlcNAc...) asparagine glycan is linked to Asn-439. A helical membrane pass occupies residues 452–472; that stretch reads WVGGIMPLAGLAGGIAGGPFI. Residues 473-484 are Cytoplasmic-facing; it reads EYLGRRNTILAT. The helical transmembrane segment at 485–505 threads the bilayer; sequence AIPFIVSSLLIACAVNVAMVL. Topologically, residues 506–508 are extracellular; it reads AGR. A helical membrane pass occupies residues 509-529; sequence FLAGFCVGIASLSLPVYLGET. Residues 530 to 535 lie on the Cytoplasmic side of the membrane; the sequence is VQPEVR. A helical transmembrane segment spans residues 536–556; the sequence is GTLGLLPTAFGNIGILLCFVA. Topologically, residues 557–563 are extracellular; that stretch reads GTYMDWS. Residues 564-584 form a helical membrane-spanning segment; it reads MLAFLGAALPVPFLILMFLIP. At 585–653 the chain is on the cytoplasmic side; that stretch reads ETPRWFVSRG…NLKPLSISLG (69 aa). A helical membrane pass occupies residues 654 to 674; that stretch reads LMFFQQLSGINAVIFYTVSIF. The Extracellular portion of the chain corresponds to 675-684; it reads KDAGSTIDGN. Residues 685 to 705 traverse the membrane as a helical segment; it reads LCTIIVGIVNFMATFIATLLI. Topologically, residues 706–711 are cytoplasmic; sequence DRAGRK. A helical membrane pass occupies residues 712–732; it reads ILLYVSNIAMIITLFVLGGFF. Over 733-751 the chain is Extracellular; it reads YCKSHGQDVSQLGWLPLSC. A helical membrane pass occupies residues 752 to 772; the sequence is FVIYILGFSLGFGPIPWLMMG. Residues 773 to 778 lie on the Cytoplasmic side of the membrane; that stretch reads EILPSK. The helical transmembrane segment at 779 to 799 threads the bilayer; it reads IRGSAASVATAFNWSCTFVVT. At 800–812 the chain is on the extracellular side; that stretch reads KTFQDMIDFMGAH. The chain crosses the membrane as a helical span at residues 813–833; sequence GAFWLFGSICFIGLFFVILYV. At 834–868 the chain is on the cytoplasmic side; that stretch reads PETQGKTLEDIERKMMGRVRRMSSVANMKPLAFNM. Phosphoserine is present on residues Ser-856 and Ser-857.

The protein belongs to the major facilitator superfamily. Sugar transporter (TC 2.A.1.1) family. Trehalose transporter subfamily.

Its subcellular location is the cell membrane. Functionally, low-capacity facilitative transporter for trehalose. Does not transport maltose, sucrose or lactose. Mediates the bidirectional transfer of trehalose. Responsible for the transport of trehalose synthesized in the fat body and the incorporation of trehalose into other tissues that require a carbon source, thereby regulating trehalose levels in the hemolymph. The protein is Facilitated trehalose transporter Tret1 of Drosophila pseudoobscura pseudoobscura (Fruit fly).